The chain runs to 72 residues: Protein SlyX homolog (72 aa).

The protein belongs to the SlyX family.

This is Protein SlyX homolog from Vibrio cholerae serotype O1 (strain ATCC 39541 / Classical Ogawa 395 / O395).